An 815-amino-acid polypeptide reads, in one-letter code: Ent-sandaracopimara-8(14),15-diene synthase, chloroplastic (815 aa).

The N-terminal 38 residues, 1–38 (MLPSSICSMGQIPRTSPHYYGMLPKQMSKGHPPMVTRA), are a transit peptide targeting the chloroplast. 5 residues coordinate Mg(2+): aspartate 550, aspartate 554, asparagine 696, threonine 700, and glutamate 704. The DDXXD motif signature appears at 550–554 (DDFFD).

It belongs to the terpene synthase family. The cofactor is Mg(2+).

The protein resides in the plastid. It is found in the chloroplast. The catalysed reaction is ent-copalyl diphosphate = ent-sandaracopimara-8(14),15-diene + diphosphate. The enzyme catalyses 9alpha-copalyl diphosphate = (12E)-9alpha-labda-8(17),12,14-triene + diphosphate. Functionally, involved in the biosynthesis of oryzalexin A-F phytoalexins. Catalyzes the conversion of ent-copalyl diphosphate to the phytoalexin precursor ent-sandaracopimaradiene. This is Ent-sandaracopimara-8(14),15-diene synthase, chloroplastic from Oryza sativa subsp. japonica (Rice).